We begin with the raw amino-acid sequence, 327 residues long: Malate dehydrogenase (327 aa).

An NAD(+)-binding site is contributed by 12–18 (GAAGQIA). Residues R93 and R99 each coordinate substrate. Residues N106, Q113, and 130–132 (VGN) contribute to the NAD(+) site. 2 residues coordinate substrate: N132 and R163. Residue H188 is the Proton acceptor of the active site.

This sequence belongs to the LDH/MDH superfamily. MDH type 2 family.

It catalyses the reaction (S)-malate + NAD(+) = oxaloacetate + NADH + H(+). Its function is as follows. Catalyzes the reversible oxidation of malate to oxaloacetate. The protein is Malate dehydrogenase of Paraburkholderia phytofirmans (strain DSM 17436 / LMG 22146 / PsJN) (Burkholderia phytofirmans).